We begin with the raw amino-acid sequence, 346 residues long: Thiamine-phosphate synthase (346 aa).

Residues 1-125 (MSVTPNPDQH…SKISAQIRYE (125 aa)) form a unknown region. A thiamine-phosphate synthase region spans residues 126–346 (IYDLEVIILK…SKELLGKLKK (221 aa)). 4-amino-2-methyl-5-(diphosphooxymethyl)pyrimidine is bound by residues 177-181 (QYRCK) and asparagine 209. Aspartate 210 and aspartate 229 together coordinate Mg(2+). Serine 248 is a 4-amino-2-methyl-5-(diphosphooxymethyl)pyrimidine binding site. Position 274–276 (274–276 (TKS)) interacts with 2-[(2R,5Z)-2-carboxy-4-methylthiazol-5(2H)-ylidene]ethyl phosphate. A 4-amino-2-methyl-5-(diphosphooxymethyl)pyrimidine-binding site is contributed by lysine 277. Glycine 304 provides a ligand contact to 2-[(2R,5Z)-2-carboxy-4-methylthiazol-5(2H)-ylidene]ethyl phosphate.

It belongs to the thiamine-phosphate synthase family. Mg(2+) serves as cofactor.

The catalysed reaction is 2-[(2R,5Z)-2-carboxy-4-methylthiazol-5(2H)-ylidene]ethyl phosphate + 4-amino-2-methyl-5-(diphosphooxymethyl)pyrimidine + 2 H(+) = thiamine phosphate + CO2 + diphosphate. The enzyme catalyses 2-(2-carboxy-4-methylthiazol-5-yl)ethyl phosphate + 4-amino-2-methyl-5-(diphosphooxymethyl)pyrimidine + 2 H(+) = thiamine phosphate + CO2 + diphosphate. It catalyses the reaction 4-methyl-5-(2-phosphooxyethyl)-thiazole + 4-amino-2-methyl-5-(diphosphooxymethyl)pyrimidine + H(+) = thiamine phosphate + diphosphate. It functions in the pathway cofactor biosynthesis; thiamine diphosphate biosynthesis; thiamine phosphate from 4-amino-2-methyl-5-diphosphomethylpyrimidine and 4-methyl-5-(2-phosphoethyl)-thiazole: step 1/1. Condenses 4-methyl-5-(beta-hydroxyethyl)thiazole monophosphate (THZ-P) and 2-methyl-4-amino-5-hydroxymethyl pyrimidine pyrophosphate (HMP-PP) to form thiamine monophosphate (TMP). The chain is Thiamine-phosphate synthase from Prochlorococcus marinus (strain SARG / CCMP1375 / SS120).